The primary structure comprises 260 residues: Indole-3-glycerol phosphate synthase (260 aa).

This sequence belongs to the TrpC family.

It catalyses the reaction 1-(2-carboxyphenylamino)-1-deoxy-D-ribulose 5-phosphate + H(+) = (1S,2R)-1-C-(indol-3-yl)glycerol 3-phosphate + CO2 + H2O. The protein operates within amino-acid biosynthesis; L-tryptophan biosynthesis; L-tryptophan from chorismate: step 4/5. This chain is Indole-3-glycerol phosphate synthase, found in Staphylococcus aureus (strain bovine RF122 / ET3-1).